The chain runs to 238 residues: Uridylate kinase (238 aa).

12–15 lines the ATP pocket; sequence KLSG. G54 contributes to the UMP binding site. ATP-binding residues include G55 and R59. Residues D74 and 135–142 contribute to the UMP site; that span reads TGNPFFTT. Residues T162, Y168, and D171 each coordinate ATP.

Belongs to the UMP kinase family. In terms of assembly, homohexamer.

Its subcellular location is the cytoplasm. The enzyme catalyses UMP + ATP = UDP + ADP. Its pathway is pyrimidine metabolism; CTP biosynthesis via de novo pathway; UDP from UMP (UMPK route): step 1/1. Inhibited by UTP. Catalyzes the reversible phosphorylation of UMP to UDP. This chain is Uridylate kinase, found in Janthinobacterium sp. (strain Marseille) (Minibacterium massiliensis).